The sequence spans 528 residues: ATP synthase subunit beta 2 (528 aa).

Positions 1 to 10 are enriched in polar residues; that stretch reads MADPQATNGT. A disordered region spans residues 1 to 27; that stretch reads MADPQATNGTGAACAERDASDVGDARD. The segment covering 15–27 has biased composition (basic and acidic residues); it reads AERDASDVGDARD. 179-186 contributes to the ATP binding site; the sequence is GGAGVGKT. A compositionally biased stretch (basic and acidic residues) spans 488–499; it reads AAAREADARREA. A disordered region spans residues 488–528; the sequence is AAAREADARREAAAAASGAGPGTTSDPASGSAEPQGARHGR.

It belongs to the ATPase alpha/beta chains family. In terms of assembly, F-type ATPases have 2 components, CF(1) - the catalytic core - and CF(0) - the membrane proton channel. CF(1) has five subunits: alpha(3), beta(3), gamma(1), delta(1), epsilon(1). CF(0) has three main subunits: a(1), b(2) and c(9-12). The alpha and beta chains form an alternating ring which encloses part of the gamma chain. CF(1) is attached to CF(0) by a central stalk formed by the gamma and epsilon chains, while a peripheral stalk is formed by the delta and b chains.

The protein localises to the cell inner membrane. It catalyses the reaction ATP + H2O + 4 H(+)(in) = ADP + phosphate + 5 H(+)(out). Its function is as follows. Produces ATP from ADP in the presence of a proton gradient across the membrane. The catalytic sites are hosted primarily by the beta subunits. The sequence is that of ATP synthase subunit beta 2 from Burkholderia pseudomallei (strain 1106a).